The following is a 534-amino-acid chain: Cytochrome c oxidase subunit 1 (534 aa).

Over 1–14 (MVQRWLYSTNAKDI) the chain is Mitochondrial matrix. The helical transmembrane segment at 15 to 39 (AVLYFMLAIFSGMAGTAMSLIIRLE) threads the bilayer. Residues E39, A42, and G44 each coordinate Ca(2+). The Mitochondrial intermembrane portion of the chain corresponds to 40 to 54 (LAAPGSQYLHGNSQL). A helical membrane pass occupies residues 55–88 (FNVLVVGHAVLMIFFLVMPALIGGFGNYLLPLMI). H62 lines the Fe(II)-heme a pocket. Over 89-97 (GATDTAFPR) the chain is Mitochondrial matrix. The helical transmembrane segment at 98–118 (INNIAFWVLPMGLVCLVTSTL) threads the bilayer. Topologically, residues 119-142 (VESGAGTGWTVYPPLSSIQAHSGP) are mitochondrial intermembrane. The helical transmembrane segment at 143-171 (SVDLAIFALHLTSISSLLGAINFIVTTLN) threads the bilayer. Residues 172–183 (MRTNGMTMHKLP) lie on the Mitochondrial matrix side of the membrane. Residues 184 to 215 (LFVWSIFITAFLLLLSLPVLSAGITMLLLDRN) traverse the membrane as a helical segment. Topologically, residues 216-228 (FNTSFFEVSGGGD) are mitochondrial intermembrane. The helical transmembrane segment at 229 to 263 (PILYEHLFWFFGHPEVYILIIPGFGIISHVVSTYS) threads the bilayer. Residue H241 coordinates Cu cation. A cross-link (1'-histidyl-3'-tyrosine (His-Tyr)) is located at residues 241 to 245 (HPEVY). Position 245 (Y245) interacts with O2. Residues 264–269 (KKPVFG) are Mitochondrial matrix-facing. Residues 270–295 (EISMVYAMASIGLLGFLVWSHHMYIV) form a helical membrane-spanning segment. Residues H290 and H291 each coordinate Cu cation. Residues 296 to 298 (GLD) lie on the Mitochondrial intermembrane side of the membrane. A helical membrane pass occupies residues 299–327 (ADTRAYFTSATMIIAIPTGIKIFSWLATI). Over 328 to 335 (HGGSIRLA) the chain is Mitochondrial matrix. A helical transmembrane segment spans residues 336-358 (TPMLYAIAFLFLFTMGGLTGVAL). Over 359–370 (ANASLDVAFHDT) the chain is Mitochondrial intermembrane. The Mg(2+) site is built by H368 and D369. Residues 371 to 400 (YYVVGHFHYVLSMGAIFSLFAGYYYWSPQI) traverse the membrane as a helical segment. Position 376 (H376) interacts with heme a3. Residue H378 participates in Fe(II)-heme a binding. Residues 401–406 (LGLNYN) are Mitochondrial matrix-facing. A helical membrane pass occupies residues 407 to 431 (EKLAQIQFWLIFIGANVIFFPMHFL). The Mitochondrial intermembrane portion of the chain corresponds to 432-449 (GINGMPRRIPDYPDAFAG). Residue P441 coordinates Ca(2+). Residues 450–474 (WNYVASIGSFIATLSLFLFIYILYD) traverse the membrane as a helical segment. The Mitochondrial matrix segment spans residues 475–534 (QLVNGLNNKVNNKSVIYNKAPDFVESNTIFNLNTVKSSSIEFLLTSPPAVHSFNTPAVQS).

Belongs to the heme-copper respiratory oxidase family. Component of the cytochrome c oxidase (complex IV, CIV), a multisubunit enzyme composed of 12 subunits. The complex is composed of a catalytic core of 3 subunits COX1, COX2 and COX3, encoded in the mitochondrial DNA, and 9 supernumerary subunits COX4, COX5A (or COX5B), COX6, COX7, COX8, COX9, COX12, COX13 and COX26, which are encoded in the nuclear genome. The complex exists as a monomer or a dimer and forms supercomplexes (SCs) in the inner mitochondrial membrane with a dimer of ubiquinol-cytochrome c oxidoreductase (cytochrome b-c1 complex, complex III, CIII), resulting in 2 different assemblies (supercomplexes III(2)IV and III(2)IV(2)). Heme serves as cofactor. Requires Cu cation as cofactor. In terms of processing, the N-terminus is blocked.

It localises to the mitochondrion inner membrane. The enzyme catalyses 4 Fe(II)-[cytochrome c] + O2 + 8 H(+)(in) = 4 Fe(III)-[cytochrome c] + 2 H2O + 4 H(+)(out). It functions in the pathway energy metabolism; oxidative phosphorylation. Component of the cytochrome c oxidase, the last enzyme in the mitochondrial electron transport chain which drives oxidative phosphorylation. The respiratory chain contains 3 multisubunit complexes succinate dehydrogenase (complex II, CII), ubiquinol-cytochrome c oxidoreductase (cytochrome b-c1 complex, complex III, CIII) and cytochrome c oxidase (complex IV, CIV), that cooperate to transfer electrons derived from NADH and succinate to molecular oxygen, creating an electrochemical gradient over the inner membrane that drives transmembrane transport and the ATP synthase. Cytochrome c oxidase is the component of the respiratory chain that catalyzes the reduction of oxygen to water. Electrons originating from reduced cytochrome c in the intermembrane space (IMS) are transferred via the dinuclear copper A center (CU(A)) of COX2 and heme A of COX1 to the active site in COX1, a binuclear center (BNC) formed by heme A3 and copper B (CU(B)). The BNC reduces molecular oxygen to 2 water molecules using 4 electrons from cytochrome c in the IMS and 4 protons from the mitochondrial matrix. COX1 is a catalytic core subunit containing heme A and the active site BNC with heme A3 and the copper atom CU(B). The chain is Cytochrome c oxidase subunit 1 (COX1) from Saccharomyces cerevisiae (strain ATCC 204508 / S288c) (Baker's yeast).